The primary structure comprises 354 residues: tRNA pseudouridine synthase D (354 aa).

Asp-86 (nucleophile) is an active-site residue. Positions 162 to 309 (GVPNYFGPQR…LEVGRRALRL (148 aa)) constitute a TRUD domain.

Belongs to the pseudouridine synthase TruD family.

It catalyses the reaction uridine(13) in tRNA = pseudouridine(13) in tRNA. Functionally, responsible for synthesis of pseudouridine from uracil-13 in transfer RNAs. The polypeptide is tRNA pseudouridine synthase D (Methylococcus capsulatus (strain ATCC 33009 / NCIMB 11132 / Bath)).